Consider the following 485-residue polypeptide: Ribulose bisphosphate carboxylase large chain (485 aa).

The propeptide occupies 1–2 (MS). Residue P3 is modified to N-acetylproline. N6,N6,N6-trimethyllysine is present on K14. Residues N123 and T173 each coordinate substrate. K175 acts as the Proton acceptor in catalysis. A substrate-binding site is contributed by K177. Residues K201, D203, and E204 each contribute to the Mg(2+) site. K201 carries the N6-carboxylysine modification. The Proton acceptor role is filled by H294. Positions 295, 327, and 379 each coordinate substrate.

This sequence belongs to the RuBisCO large chain family. Type I subfamily. Heterohexadecamer of 8 large chains and 8 small chains; disulfide-linked. The disulfide link is formed within the large subunit homodimers. Mg(2+) is required as a cofactor. Post-translationally, the disulfide bond which can form in the large chain dimeric partners within the hexadecamer appears to be associated with oxidative stress and protein turnover.

Its subcellular location is the plastid. The protein localises to the chloroplast. It carries out the reaction 2 (2R)-3-phosphoglycerate + 2 H(+) = D-ribulose 1,5-bisphosphate + CO2 + H2O. The enzyme catalyses D-ribulose 1,5-bisphosphate + O2 = 2-phosphoglycolate + (2R)-3-phosphoglycerate + 2 H(+). Functionally, ruBisCO catalyzes two reactions: the carboxylation of D-ribulose 1,5-bisphosphate, the primary event in carbon dioxide fixation, as well as the oxidative fragmentation of the pentose substrate in the photorespiration process. Both reactions occur simultaneously and in competition at the same active site. The chain is Ribulose bisphosphate carboxylase large chain from Flaveria pringlei.